The following is a 101-amino-acid chain: Small ribosomal subunit protein uS14 (101 aa).

This sequence belongs to the universal ribosomal protein uS14 family. As to quaternary structure, part of the 30S ribosomal subunit. Contacts proteins S3 and S10.

Functionally, binds 16S rRNA, required for the assembly of 30S particles and may also be responsible for determining the conformation of the 16S rRNA at the A site. The polypeptide is Small ribosomal subunit protein uS14 (Polaromonas naphthalenivorans (strain CJ2)).